Here is a 330-residue protein sequence, read N- to C-terminus: MKKTFILQQQEISFVKNTFTQNLIEQLGIIEVQGPILSQVGNGMQDNLSGIEKAVQVNVKCIPNAVFEVVHSLAKWKRHTLARFNFKEDEGLFVHMKALRPDEDSLDPTHSVYVDQWDWEKVIPEGRRNFAYLKETVNSIYRAIRLTELAVEARFDIPSILPKQITFVHSEDLVKRYPDLSSKERENAICKEYGAVFLIGIGGKLSDGKPHDGRAPDYDDWTTESENGYKGLNGDILVWNDQLGKAFELSSMGIRVDESALRLQVGLTGDEDHLKMDWHQDLLNGKLPLTIGGGIGQSRLAMLLLRKKHIGEVQSSVWPKEMLEEFSNIL.

The protein belongs to the class-II aminoacyl-tRNA synthetase family. AsnA subfamily.

Its subcellular location is the cytoplasm. It carries out the reaction L-aspartate + NH4(+) + ATP = L-asparagine + AMP + diphosphate + H(+). It functions in the pathway amino-acid biosynthesis; L-asparagine biosynthesis; L-asparagine from L-aspartate (ammonia route): step 1/1. This Haemophilus influenzae (strain ATCC 51907 / DSM 11121 / KW20 / Rd) protein is Aspartate--ammonia ligase.